A 74-amino-acid chain; its full sequence is Ubiquitin-like protein FUBI (74 aa).

It belongs to the ubiquitin family.

The protein is Ubiquitin-like protein FUBI (FAU) of Bos taurus (Bovine).